We begin with the raw amino-acid sequence, 506 residues long: Sodium-coupled neutral amino acid symporter 2 (506 aa).

Positions 1 to 23 (MKKAEMGRFSISPDEDSSSYSSN) are disordered. Topologically, residues 1–76 (MKKAEMGRFS…HPGTTSFGMS (76 aa)) are cytoplasmic. Residues 1-96 (MKKAEMGRFS…SGILGLSYAM (96 aa)) form a regulates protein turnover upon amino acid deprivation region. Phosphoserine is present on residues Ser-10, Ser-12, Ser-21, Ser-22, and Ser-55. The chain crosses the membrane as a helical span at residues 77–96 (VFNLSNAIVGSGILGLSYAM). Position 82 (Asn-82) interacts with Na(+). Residues 97 to 102 (ANTGIA) lie on the Extracellular side of the membrane. The helical transmembrane segment at 103-123 (LFIILLTFVSIFSLYSVHLLL) threads the bilayer. Residues 124–158 (KTANEGGSLLYEQLGYKAFGLVGKLAASGSITMQN) are Cytoplasmic-facing. Residues 159-177 (IGAMSSYLFIVKYELPLVI) form a helical membrane-spanning segment. Over 178-188 (QALTNIEDKTG) the chain is Extracellular. A helical membrane pass occupies residues 189 to 209 (LWYLNGNYLVLLVSLVVILPL). At 210 to 217 (SLFRNLGY) the chain is on the cytoplasmic side. A helical transmembrane segment spans residues 218-238 (LGYTSGLSLLCMVFFLIVVIC). At 239–292 (KKFQVPCPVEAALIINETINTTLTQPTALVPALSHNVTENDSCRPHYFIFNSQT) the chain is on the extracellular side. A disulfide bridge links Cys-245 with Cys-281. Asn-258 and Asn-274 each carry an N-linked (GlcNAc...) asparagine glycan. Residues 293–313 (VYAVPILIFSFVCHPAVLPIY) form a helical membrane-spanning segment. Topologically, residues 314–329 (EELKDRSRRRMMNVSK) are cytoplasmic. Residues 330–350 (ISFFAMFLMYLLAALFGYLTF) traverse the membrane as a helical segment. Topologically, residues 351–371 (YEHVESELLHTYSSILGTDIL) are extracellular. Residues 372-392 (LLIVRLAVLMAVTLTVPVVIF) form a helical membrane-spanning segment. Thr-386 lines the Na(+) pocket. Residues 393–413 (PIRSSVTHLLCASKDFSWWRH) lie on the Cytoplasmic side of the membrane. Residues 414-434 (SLITVSILAFTNLLVIFVPTI) form a helical membrane-spanning segment. Residues 435–436 (RD) lie on the Extracellular side of the membrane. A helical transmembrane segment spans residues 437–457 (IFGFIGASAASMLIFILPSAF). At 458 to 472 (YIKLVKKEPMKSVQK) the chain is on the cytoplasmic side. Residues 473 to 495 (IGALFFLLSGVLVMTGSMALIVL) form a helical membrane-spanning segment. The Extracellular segment spans residues 496-506 (DWVHNAPGGGH).

It belongs to the amino acid/polyamine transporter 2 family. Post-translationally, polyubiquitination by NEDD4L regulates the degradation and the activity of SLC38A2. In terms of tissue distribution, ubiquitously expressed. Expressed in neocortex. Widely expressed in the central nervous system with higher concentrations in caudal regions. Expressed by glutamatergic and GABAergic neurons together with astrocytes and other non-neuronal cells in the cerebral cortex (at protein level).

It is found in the cell membrane. The catalysed reaction is L-alanine(in) + Na(+)(in) = L-alanine(out) + Na(+)(out). The enzyme catalyses glycine(in) + Na(+)(in) = glycine(out) + Na(+)(out). It carries out the reaction L-serine(in) + Na(+)(in) = L-serine(out) + Na(+)(out). It catalyses the reaction L-proline(in) + Na(+)(in) = L-proline(out) + Na(+)(out). The catalysed reaction is L-methionine(in) + Na(+)(in) = L-methionine(out) + Na(+)(out). The enzyme catalyses L-histidine(in) + Na(+)(in) = L-histidine(out) + Na(+)(out). It carries out the reaction L-asparagine(in) + Na(+)(in) = L-asparagine(out) + Na(+)(out). It catalyses the reaction L-glutamine(in) + Na(+)(in) = L-glutamine(out) + Na(+)(out). The catalysed reaction is L-threonine(in) + Na(+)(in) = L-threonine(out) + Na(+)(out). The enzyme catalyses L-leucine(in) + Na(+)(in) = L-leucine(out) + Na(+)(out). It carries out the reaction L-phenylalanine(in) + Na(+)(in) = L-phenylalanine(out) + Na(+)(out). With respect to regulation, inhibited by N-methyl-D-glucamine. Inhibited by choline. Allosteric regulation of sodium ions binding by pH. Symporter that cotransports neutral amino acids and sodium ions from the extracellular to the intracellular side of the cell membrane. The transport is pH-sensitive, Li(+)-intolerant, electrogenic, driven by the Na(+) electrochemical gradient and cotransports of neutral amino acids and sodium ions with a stoichiometry of 1:1. May function in the transport of amino acids at the blood-brain barrier. May function in the transport of amino acids in the supply of maternal nutrients to the fetus through the placenta. Maintains a key metabolic glutamine/glutamate balance underpinning retrograde signaling by dendritic release of the neurotransmitter glutamate. Transports L-proline in differentiating osteoblasts for the efficient synthesis of proline-enriched proteins and provides proline essential for osteoblast differentiation and bone formation during bone development. This is Sodium-coupled neutral amino acid symporter 2 from Homo sapiens (Human).